Reading from the N-terminus, the 156-residue chain is Arginine repressor (156 aa).

It belongs to the ArgR family.

The protein localises to the cytoplasm. It functions in the pathway amino-acid biosynthesis; L-arginine biosynthesis [regulation]. Regulates arginine biosynthesis genes. The chain is Arginine repressor from Yersinia enterocolitica serotype O:8 / biotype 1B (strain NCTC 13174 / 8081).